We begin with the raw amino-acid sequence, 1170 residues long: Error-prone DNA polymerase (1170 aa).

2 disordered regions span residues 867 to 899 and 1129 to 1170; these read RGAR…LHND and IPHG…RDFH. Residues 886–899 show a composition bias toward basic and acidic residues; sequence PRNDNDRQIPLHND.

This sequence belongs to the DNA polymerase type-C family. DnaE2 subfamily.

The protein resides in the cytoplasm. It carries out the reaction DNA(n) + a 2'-deoxyribonucleoside 5'-triphosphate = DNA(n+1) + diphosphate. DNA polymerase involved in damage-induced mutagenesis and translesion synthesis (TLS). It is not the major replicative DNA polymerase. In Bradyrhizobium sp. (strain ORS 278), this protein is Error-prone DNA polymerase.